We begin with the raw amino-acid sequence, 281 residues long: NADPH-dependent 7-cyano-7-deazaguanine reductase (281 aa).

Position 87–89 (Val87–Ser89) interacts with substrate. Ser89–Lys90 is a binding site for NADPH. Cys188 serves as the catalytic Thioimide intermediate. Asp195 (proton donor) is an active-site residue. A substrate-binding site is contributed by His227–Glu228. Arg256 to Gly257 is a binding site for NADPH.

This sequence belongs to the GTP cyclohydrolase I family. QueF type 2 subfamily. As to quaternary structure, homodimer.

It is found in the cytoplasm. It carries out the reaction 7-aminomethyl-7-carbaguanine + 2 NADP(+) = 7-cyano-7-deazaguanine + 2 NADPH + 3 H(+). Its pathway is tRNA modification; tRNA-queuosine biosynthesis. In terms of biological role, catalyzes the NADPH-dependent reduction of 7-cyano-7-deazaguanine (preQ0) to 7-aminomethyl-7-deazaguanine (preQ1). This chain is NADPH-dependent 7-cyano-7-deazaguanine reductase, found in Aliivibrio fischeri (strain ATCC 700601 / ES114) (Vibrio fischeri).